Consider the following 104-residue polypeptide: Protein translation factor SUI1 homolog (104 aa).

It belongs to the SUI1 family.

This chain is Protein translation factor SUI1 homolog, found in Ignicoccus hospitalis (strain KIN4/I / DSM 18386 / JCM 14125).